The primary structure comprises 547 residues: Chaperonin GroEL (547 aa).

ATP is bound by residues 30 to 33 (TLGP), Lys51, 87 to 91 (DGTTT), Gly415, and Asp496.

This sequence belongs to the chaperonin (HSP60) family. As to quaternary structure, forms a cylinder of 14 subunits composed of two heptameric rings stacked back-to-back. Interacts with the co-chaperonin GroES.

It is found in the cytoplasm. It catalyses the reaction ATP + H2O + a folded polypeptide = ADP + phosphate + an unfolded polypeptide.. Functionally, together with its co-chaperonin GroES, plays an essential role in assisting protein folding. The GroEL-GroES system forms a nano-cage that allows encapsulation of the non-native substrate proteins and provides a physical environment optimized to promote and accelerate protein folding. In Actinobacillus pleuropneumoniae serotype 7 (strain AP76), this protein is Chaperonin GroEL.